The following is a 120-amino-acid chain: Large ribosomal subunit protein uL18 (120 aa).

The segment at Met1–Arg26 is disordered. Positions Ser8–Gly18 are enriched in basic residues.

Belongs to the universal ribosomal protein uL18 family. In terms of assembly, part of the 50S ribosomal subunit; part of the 5S rRNA/L5/L18/L25 subcomplex. Contacts the 5S and 23S rRNAs.

This is one of the proteins that bind and probably mediate the attachment of the 5S RNA into the large ribosomal subunit, where it forms part of the central protuberance. This chain is Large ribosomal subunit protein uL18, found in Trichormus variabilis (strain ATCC 29413 / PCC 7937) (Anabaena variabilis).